An 874-amino-acid polypeptide reads, in one-letter code: Rho GTPase-activating protein 42 (874 aa).

The BAR domain occupies 7–262 (EFSDSYLDSP…MKSANQDYRP (256 aa)). Positions 225-261 (KQQLQFNLQNTRNNFESTRQEVERLMQRMKSANQDYR) form a coiled coil. The PH domain maps to 265–374 (QWTMEGYLYV…WLEAMDGKEP (110 aa)). A Phosphotyrosine modification is found at tyrosine 376. Residues 376-572 (YTLPAIISKK…ILIEHYEKIF (197 aa)) enclose the Rho-GAP domain. The disordered stretch occupies residues 575-720 (APDPSIPLPQ…GDVSPPIDLV (146 aa)). The segment covering 620–650 (DSYSSSPDSTPMGSIESLSSHSSEQNSTTKS) has biased composition (low complexity). Positions 667–686 (TPSSSNGQKSLGLWTTSPES) are enriched in polar residues. Phosphoserine is present on serine 683. Residues 687–697 (SSREDATKTDA) show a composition bias toward basic and acidic residues. Over residues 700–711 (DCQSVASVTSPG) the composition is skewed to polar residues. A phosphoserine mark is found at serine 740, serine 753, serine 756, and serine 811. A compositionally biased stretch (polar residues) spans 749-762 (SYSGSIQSLTSVGS). Positions 749–777 (SYSGSIQSLTSVGSKETPKASPNPDLPPK) are disordered. Positions 816-874 (SSGRQAKAMYSCKAEHSHELSFPQGAIFSNVYPSVEPGWLKATYEGKTGLVPENYVVFL) constitute an SH3 domain. Tyrosine 870 carries the post-translational modification Phosphotyrosine.

In terms of tissue distribution, highly and selectively expressed in smooth muscle cells.

Functionally, may influence blood pressure by functioning as a GTPase-activating protein for RHOA in vascular smooth muscle. This Homo sapiens (Human) protein is Rho GTPase-activating protein 42.